The following is a 293-amino-acid chain: Pyridoxal 5'-phosphate synthase subunit PdxS (293 aa).

D23 contributes to the D-ribose 5-phosphate binding site. K80 acts as the Schiff-base intermediate with D-ribose 5-phosphate in catalysis. A D-ribose 5-phosphate-binding site is contributed by G152. R164 is a D-glyceraldehyde 3-phosphate binding site. Residues G213 and 234–235 (GS) each bind D-ribose 5-phosphate.

It belongs to the PdxS/SNZ family. In the presence of PdxT, forms a dodecamer of heterodimers.

The catalysed reaction is aldehydo-D-ribose 5-phosphate + D-glyceraldehyde 3-phosphate + L-glutamine = pyridoxal 5'-phosphate + L-glutamate + phosphate + 3 H2O + H(+). Its pathway is cofactor biosynthesis; pyridoxal 5'-phosphate biosynthesis. Functionally, catalyzes the formation of pyridoxal 5'-phosphate from ribose 5-phosphate (RBP), glyceraldehyde 3-phosphate (G3P) and ammonia. The ammonia is provided by the PdxT subunit. Can also use ribulose 5-phosphate and dihydroxyacetone phosphate as substrates, resulting from enzyme-catalyzed isomerization of RBP and G3P, respectively. The protein is Pyridoxal 5'-phosphate synthase subunit PdxS of Roseiflexus sp. (strain RS-1).